The following is a 126-amino-acid chain: S-adenosylmethionine decarboxylase proenzyme (126 aa).

The Schiff-base intermediate with substrate; via pyruvic acid role is filled by Ser63. Ser63 carries the post-translational modification Pyruvic acid (Ser); by autocatalysis. Residue His68 is the Proton acceptor; for processing activity of the active site. The active-site Proton donor; for catalytic activity is Cys83.

This sequence belongs to the prokaryotic AdoMetDC family. Type 1 subfamily. Heterotetramer of two alpha and two beta chains arranged as a dimer of alpha/beta heterodimers. The cofactor is pyruvate. Is synthesized initially as an inactive proenzyme. Formation of the active enzyme involves a self-maturation process in which the active site pyruvoyl group is generated from an internal serine residue via an autocatalytic post-translational modification. Two non-identical subunits are generated from the proenzyme in this reaction, and the pyruvate is formed at the N-terminus of the alpha chain, which is derived from the carboxyl end of the proenzyme. The post-translation cleavage follows an unusual pathway, termed non-hydrolytic serinolysis, in which the side chain hydroxyl group of the serine supplies its oxygen atom to form the C-terminus of the beta chain, while the remainder of the serine residue undergoes an oxidative deamination to produce ammonia and the pyruvoyl group blocking the N-terminus of the alpha chain.

The catalysed reaction is S-adenosyl-L-methionine + H(+) = S-adenosyl 3-(methylsulfanyl)propylamine + CO2. It functions in the pathway amine and polyamine biosynthesis; S-adenosylmethioninamine biosynthesis; S-adenosylmethioninamine from S-adenosyl-L-methionine: step 1/1. Catalyzes the decarboxylation of S-adenosylmethionine to S-adenosylmethioninamine (dcAdoMet), the propylamine donor required for the synthesis of the polyamines spermine and spermidine from the diamine putrescine. In Oceanobacillus iheyensis (strain DSM 14371 / CIP 107618 / JCM 11309 / KCTC 3954 / HTE831), this protein is S-adenosylmethionine decarboxylase proenzyme.